Consider the following 721-residue polypeptide: Polyribonucleotide nucleotidyltransferase (721 aa).

Mg(2+) contacts are provided by aspartate 495 and aspartate 501. The region spanning 562–621 (PRITTIKIRPERIKDIIGPGGKTIKDITARTGTSINIEDDGSVSIASPNQDKVEEAIKMI) is the KH domain. The S1 motif domain occupies 631 to 699 (GRIYLGTVRK…RSGKIRLSRK (69 aa)). Residues 699-721 (KEALADSAKKSEGTEPPKGEPAK) form a disordered region.

It belongs to the polyribonucleotide nucleotidyltransferase family. The cofactor is Mg(2+).

The protein resides in the cytoplasm. It catalyses the reaction RNA(n+1) + phosphate = RNA(n) + a ribonucleoside 5'-diphosphate. Functionally, involved in mRNA degradation. Catalyzes the phosphorolysis of single-stranded polyribonucleotides processively in the 3'- to 5'-direction. This Anaeromyxobacter sp. (strain K) protein is Polyribonucleotide nucleotidyltransferase.